A 170-amino-acid polypeptide reads, in one-letter code: MORN repeat-containing protein 5 (170 aa).

MORN repeat units lie at residues 8 to 30, 31 to 53, and 54 to 75; these read YFGE…TDTR, YIGE…SGSR, and FDAI…DGLQ.

As to expression, only detected in testis (at protein level).

It is found in the cell projection. Its subcellular location is the cilium. It localises to the flagellum. The polypeptide is MORN repeat-containing protein 5 (Morn5) (Mus musculus (Mouse)).